The following is a 487-amino-acid chain: Selenium-binding protein 2 (487 aa).

N-acetylalanine is present on A2. Positions 19 and 20 each coordinate selenite.

This sequence belongs to the selenium-binding protein family. Mostly expressed in seedlings, leaves and stems, and, to a lower extent, in flowers and roots.

In terms of biological role, required for the fusion of female gametophyte polar nuclei. This Arabidopsis thaliana (Mouse-ear cress) protein is Selenium-binding protein 2 (SBP2).